The sequence spans 21 residues: Fibrinogen beta chain (21 aa).

Gln1 carries the post-translational modification Pyrrolidone carboxylic acid. Acidic residues predominate over residues 1 to 10; the sequence is QFPTDYDEGQ. Residues 1 to 21 form a disordered region; that stretch reads QFPTDYDEGQDDRPKLGLGAR. The O-linked (GalNAc...) threonine glycan is linked to Thr4. Tyr6 is subject to Sulfotyrosine.

As to quaternary structure, heterohexamer; disulfide linked. Contains 2 sets of 3 non-identical chains (alpha, beta and gamma). The 2 heterotrimers are in head to head conformation with the N-termini in a small central domain. In terms of processing, conversion of fibrinogen to fibrin is triggered by thrombin, which cleaves fibrinopeptides A and B from alpha and beta chains, and thus exposes the N-terminal polymerization sites responsible for the formation of the soft clot.

It localises to the secreted. In terms of biological role, cleaved by the protease thrombin to yield monomers which, together with fibrinogen alpha (FGA) and fibrinogen gamma (FGG), polymerize to form an insoluble fibrin matrix. Fibrin has a major function in hemostasis as one of the primary components of blood clots. In addition, functions during the early stages of wound repair to stabilize the lesion and guide cell migration during re-epithelialization. Was originally thought to be essential for platelet aggregation, based on in vitro studies using anticoagulated blood. However subsequent studies have shown that it is not absolutely required for thrombus formation in vivo. Enhances expression of SELP in activated platelets. Maternal fibrinogen is essential for successful pregnancy. Fibrin deposition is also associated with infection, where it protects against IFNG-mediated hemorrhage. May also facilitate the antibacterial immune response via both innate and T-cell mediated pathways. This Bubalus bubalis (Domestic water buffalo) protein is Fibrinogen beta chain (FGB).